The sequence spans 2325 residues: Centriolin (2325 aa).

Residues Met1–Arg33 are disordered. Over residues Pro16–Arg33 the composition is skewed to low complexity. 4 LRR repeats span residues Lys126–Leu147, Lys148–Cys169, Asn170–Lys191, and Ser194–Lys215. The LRRCT domain maps to Asn228 to Arg266. 2 coiled-coil regions span residues Phe267 to Thr343 and Leu435 to Val799. Ser831 is subject to Phosphoserine. The stretch at Leu851–Thr1101 forms a coiled coil. A disordered region spans residues Pro1150 to Pro1241. Over residues Ser1224 to Glu1235 the composition is skewed to acidic residues. Residues Glu1317–Cys2255 adopt a coiled-coil conformation. Phosphoserine is present on Ser1475. The interval Met1948–Arg2118 is required for centrosome localization. The tract at residues Gln1985 to Arg2325 is sufficient for interaction with HOOK2. Positions Val2288–Arg2325 are disordered. Low complexity predominate over residues Ser2290–Leu2314. Polar residues predominate over residues Gly2315–Arg2325.

As to quaternary structure, interacts with HOOK2. Interacts with EXOC6 and SNAPIN. Associates with the exocyst complex. As to expression, widely expressed with highest levels in testis and trachea.

It is found in the cytoplasm. The protein resides in the cytoskeleton. It localises to the microtubule organizing center. Its subcellular location is the centrosome. The protein localises to the midbody. It is found in the midbody ring. In terms of biological role, involved in cell cycle progression and cytokinesis. During the late steps of cytokinesis, anchors exocyst and SNARE complexes at the midbody, thereby allowing secretory vesicle-mediated abscission. The polypeptide is Centriolin (CNTRL) (Homo sapiens (Human)).